The following is a 632-amino-acid chain: DNA topoisomerase 4 subunit B (632 aa).

Residues tyrosine 5, asparagine 42, aspartate 69, 110–116 (GLHGVGI), and lysine 334 each bind ATP. In terms of domain architecture, Toprim spans 412–525 (TELFLVEGDS…DGHVYVAMPP (114 aa)). Mg(2+) contacts are provided by glutamate 418, aspartate 490, and aspartate 492.

The protein belongs to the type II topoisomerase family. ParE type 1 subfamily. In terms of assembly, heterotetramer composed of ParC and ParE. Requires Mg(2+) as cofactor. The cofactor is Mn(2+). Ca(2+) is required as a cofactor.

It carries out the reaction ATP-dependent breakage, passage and rejoining of double-stranded DNA.. In terms of biological role, topoisomerase IV is essential for chromosome segregation. It relaxes supercoiled DNA. Performs the decatenation events required during the replication of a circular DNA molecule. The polypeptide is DNA topoisomerase 4 subunit B (Haemophilus influenzae (strain ATCC 51907 / DSM 11121 / KW20 / Rd)).